We begin with the raw amino-acid sequence, 655 residues long: MPLKWKTSSPAIWKFPVPVLKTSRSTPLSPAYISLVEEEDQHMKLSLGSSEMGLSSHLQSSKAGTTRIFTSNTHSSVVLQGFDQLRLEGLLCDVTLMPGDTDDAFPVHRVMMASASDYFKAMFTGGMKEQDLMCIKLHGVSKVGLRKIIDFIYTAKLSLNMDNLQDTLEAASFLQILPVLDFCKVFLISGVTLDNCVEVGRIANTYNLTEVDKYVNSFVLKNFPALLSTGEFLKLPFERLAFVLSSNSLKHCTELELFKATCRWLRLEEPRMDFAAKLMKNIRFPLMTPQELINYVQTVDFMRTDNTCVNLLLEASNYQMMPYMQPVMQSDRTAIRSDTTHLVTLGGVLRQQLVVSKELRMYDEKAHEWKSLAPMDAPRYQHGIAVIGNFLYVVGGQSNYDTKGKTAVDTVFRFDPRYNKWMQVASLNEKRTFFHLSALKGYLYAVGGRNAAGELPTVECYNPRTNEWTYVAKMSEPHYGHAGTVYGGVMYISGGITHDTFQKELMCFDPDTDKWIQKAPMTTVRGLHCMCTVGERLYVIGGNHFRGTSDYDDVLSCEYYSPILDQWTPIAAMLRGQSDVGVAVFENKIYVVGGYSWNNRCMVEIVQKYDPDKDEWHKVFDLPESLGGIRACTLTVFPPEETTPSPSRESPLSAP.

A BTB domain is found at 92–161 (CDVTLMPGDT…IYTAKLSLNM (70 aa)). Residues 196–297 (CVEVGRIANT…TPQELINYVQ (102 aa)) form the BACK domain. Kelch repeat units follow at residues 341–389 (HLVT…VIGN), 390–441 (FLYV…ALKG), 442–488 (YLYA…VYGG), 490–535 (MYIS…TVGE), 537–587 (LYVI…VFEN), and 588–636 (KIYV…TLTV).

As to quaternary structure, component of the BCR(KLHL9-KLHL13) E3 ubiquitin ligase complex, at least composed of CUL3, KLHL9, KLHL13 and RBX1. Interacts with AURKB.

It functions in the pathway protein modification; protein ubiquitination. Functionally, substrate-specific adapter of a BCR (BTB-CUL3-RBX1) E3 ubiquitin-protein ligase complex required for mitotic progression and cytokinesis. The BCR(KLHL9-KLHL13) E3 ubiquitin ligase complex mediates the ubiquitination of AURKB and controls the dynamic behavior of AURKB on mitotic chromosomes and thereby coordinates faithful mitotic progression and completion of cytokinesis. This Bos taurus (Bovine) protein is Kelch-like protein 13 (KLHL13).